Reading from the N-terminus, the 173-residue chain is Insertion element IS150 protein InsJ (173 aa).

This sequence belongs to the IS150/IS1296 orfA family.

This chain is Insertion element IS150 protein InsJ (insJ), found in Escherichia coli (strain K12).